The following is a 257-amino-acid chain: Dihydroorotate dehydrogenase B (NAD(+)), electron transfer subunit (257 aa).

Positions 2–102 (IGRERMTVVS…LGPLGHGFPL (101 aa)) constitute an FAD-binding FR-type domain. FAD-binding positions include 53-56 (RPLS), 70-72 (IYR), and 77-78 (GT). [2Fe-2S] cluster-binding residues include cysteine 221, cysteine 226, cysteine 229, and cysteine 244.

The protein belongs to the PyrK family. Heterotetramer of 2 PyrK and 2 PyrD type B subunits. It depends on [2Fe-2S] cluster as a cofactor. FAD serves as cofactor.

It functions in the pathway pyrimidine metabolism; UMP biosynthesis via de novo pathway; orotate from (S)-dihydroorotate (NAD(+) route): step 1/1. In terms of biological role, responsible for channeling the electrons from the oxidation of dihydroorotate from the FMN redox center in the PyrD type B subunit to the ultimate electron acceptor NAD(+). The polypeptide is Dihydroorotate dehydrogenase B (NAD(+)), electron transfer subunit (Geobacillus thermodenitrificans (strain NG80-2)).